A 568-amino-acid polypeptide reads, in one-letter code: Phosphoribosylaminoimidazole carboxylase (568 aa).

The ATP-grasp domain maps to 110–298 (KNHLIKHDVA…QFEAHVRAVT (189 aa)). Position 138 to 193 (138 to 193 (GEKFGYPYMLKSRTLAYDGRGNFVVKDKSYCEKALEFLKDRPLYAEKWCPFTKELA)) interacts with ATP.

This sequence in the C-terminal section; belongs to the AIR carboxylase family. Class I subfamily.

The catalysed reaction is 5-amino-1-(5-phospho-D-ribosyl)imidazole-4-carboxylate + H(+) = 5-amino-1-(5-phospho-beta-D-ribosyl)imidazole + CO2. It participates in purine metabolism; IMP biosynthesis via de novo pathway; 5-amino-1-(5-phospho-D-ribosyl)imidazole-4-carboxylate from 5-amino-1-(5-phospho-D-ribosyl)imidazole (carboxylase route): step 1/1. This Candida albicans (strain SC5314 / ATCC MYA-2876) (Yeast) protein is Phosphoribosylaminoimidazole carboxylase (ADE2).